Reading from the N-terminus, the 148-residue chain is IQ domain-containing protein F5 (148 aa).

IQ domains are found at residues 11–40 and 67–96; these read ERSA…RAWI and QEWA…AVRI.

In Homo sapiens (Human), this protein is IQ domain-containing protein F5 (IQCF5).